A 271-amino-acid chain; its full sequence is Magnesium dechelatase SGR2, chloroplastic (271 aa).

A chloroplast-targeting transit peptide spans 1-54 (MCSLATNLLLPSKMKPVFPEKLSTSSLCVTTRRSKMKNRSIVPVARLFGPAIFE).

This sequence belongs to the staygreen family. As to quaternary structure, interacts with the light harvesting complex II (LHCII). Interacts with the chlorophyll catabolic enzyme (CCE) RCCR.

Its subcellular location is the plastid. It localises to the chloroplast thylakoid membrane. It carries out the reaction chlorophyll a + 2 H(+) = pheophytin a + Mg(2+). Magnesium chelatase involved in chlorophyll a degradation in the chlorophyll-protein complexes of photosystem I (PSI) and photosystem II (PSII). Contributes to the degradation of PSI and PSII in the thylakoid membranes. Required to trigger chlorophyll degradation during natural and dark-induced leaf senescence. Mediates chlorophyll degradation during embryo degreening. Recombinant SGR2 possesses high dechelating activity against chlorophyll a, very low activity against chlorophyllide a, and no activity against chlorophyll b. The polypeptide is Magnesium dechelatase SGR2, chloroplastic (Arabidopsis thaliana (Mouse-ear cress)).